Here is a 399-residue protein sequence, read N- to C-terminus: Bone morphogenetic protein 8B (399 aa).

An N-terminal signal peptide occupies residues 1–19 (MAARPGLLWLLGLALCVLG). A propeptide spanning residues 20–260 (GGHLSHPPHV…ANQSPVRAPR (241 aa)) is cleaved from the precursor. N155 and N340 each carry an N-linked (GlcNAc...) asparagine glycan. 3 cysteine pairs are disulfide-bonded: C298–C364, C327–C396, and C331–C398.

Belongs to the TGF-beta family. Homodimer; disulfide-linked. In terms of tissue distribution, expressed in testis. Expressed in decidual cells of the uterus and in trophoblast cells of the labyrinthine region of the placenta and in the inner root sheath of hair follicles of early postnatal skin. Expressed in the extraembryonic ectoderm in pregastrula and gastrula stage mouse embryos. Expressed in brown adipose tissue and brain.

It localises to the secreted. Functionally, induces cartilage and bone formation. May be the osteoinductive factor responsible for the phenomenon of epithelial osteogenesis. Plays a role in calcium regulation and bone homeostasis. Involved in the generation of primordial germ cells; this function involves Bmp4 in a synergistic manner though separate receptor complexes seem to be involved. Required for the initiation and maintenance of spermatogenesis. Signaling protein involved in regulation of thermogenesis and energy balance. Proposed to increase the peripheral response of brown adipose tissue (BAT) to adrenergic stimulation while acting centrally in the hypothalamus to increase sympathetic output to BAT. This is Bone morphogenetic protein 8B (Bmp8b) from Mus musculus (Mouse).